We begin with the raw amino-acid sequence, 585 residues long: MLSSFLMLSIISSLLTICVIFLVRMLYIKYTQNIMSHKIWLLVLVSTLIPLIPFYKISNFTFSKDMMNRNVSDTTSSVSHMLDGQQSSVTKDLAINVNQFETSNITYMILLIWVFGSLLCLFYMIKAFRQIDVIKSSSLESSYLNERLKVCQSKMQFYKKHITISYSSNIDNPMVFGLVKSQIVLPTVVVETMNDKEIEYIILHELSHVKSHDLIFNQLYVVFKMIFWFNPALYISKTMMDNDCEKVCDRNVLKILNRHEHIRYGESILKCSILKSQHINNVAAQYLLGFNSNIKERVKYIALYDSMPKPNRNKRIVAYIVCSISLLIQAPLLSAHVQQDKYETNVSYKKLNQLAPYFKGFDGSFVLYNEREQAYSIYNEPESKQRYSPNSTYKIYLALMAFDQNLLSLNHTEQQWDKHQYPFKEWNQDQNLNSSMKYSVNWYYENLNKHLRQDEVKSYLDLIEYGNEEISGNENYWNESSLKISAIEQVNLLKNMKQHNMHFDNKAIEKVENSMTLKQKDTYKYVGKTGTGIVNHKEANGWFVGYVETKDNTYYFATHLKGEDNANGEKAQQISERILKEMELI.

The tract at residues 351–585 (LNQLAPYFKG…ERILKEMELI (235 aa)) is beta-lactamase-like.

This sequence belongs to the peptidase M56 family.

Functionally, penicillin-interactive protein and potential antirepressor. In Staphylococcus aureus (strain Mu50 / ATCC 700699), this protein is Methicillin resistance mecR1 protein (mecR1).